We begin with the raw amino-acid sequence, 458 residues long: Preferentially expressed antigen in melanoma-like protein 1 (458 aa).

The stretch at 99–126 is one LRR 1; degenerate repeat; the sequence is RCKLQVLDLRVMPLKLWNRLPVFGTAGC. The LRR 2; degenerate repeat unit spans residues 176–200; that stretch reads SLCCCKLQIWAMSMYYHRKLLEILD. The stretch at 201 to 227 is one LRR 3; degenerate repeat; it reads LDSVQELRMYCISNPVCLLNFAPYLGR. The stretch at 228-263 is one LRR 4; degenerate repeat; it reads MRNLRCLILSHLWQTFSMTPVEKQQVITQFTSQFLK. LRR repeat units lie at residues 264–289, 290–321, 322–340, 346–373, and 374–398; these read LKCLQILHLDTVFFLEGHLDELFWWL, KTPLETLSVIDCNLSKSDWFHISEFQCTSQLK, HLNLKWVKLTHLSPEPLRV, ASTLTSLDLEGCQMMDSQLSAILPALRC, and CTQLTKFNFHGNYISMPILRELAYN.

Belongs to the PRAME family. Specifically expressed in testis (at protein level).

The protein localises to the cytoplasm. It is found in the cytoplasmic vesicle. Its subcellular location is the secretory vesicle. The protein resides in the acrosome. It localises to the cell projection. The protein localises to the cilium. It is found in the flagellum. Functionally, may play a role in acrosome development and also in sperm maturation and motility. In Mus musculus (Mouse), this protein is Preferentially expressed antigen in melanoma-like protein 1.